The following is a 302-amino-acid chain: ATP synthase subunit a (302 aa).

A run of 7 helical transmembrane segments spans residues 61 to 81 (VDSL…FWLG), 119 to 139 (IAPL…MDLI), 148 to 168 (FEWV…FKIV), 172 to 192 (DPNI…FLTI), 214 to 234 (PVVK…ALLA), 252 to 272 (FVFI…AWPW), and 273 to 293 (AVFH…LTIV).

Belongs to the ATPase A chain family. In terms of assembly, F-type ATPases have 2 components, CF(1) - the catalytic core - and CF(0) - the membrane proton channel. CF(1) has five subunits: alpha(3), beta(3), gamma(1), delta(1), epsilon(1). CF(0) has three main subunits: a(1), b(2) and c(9-12). The alpha and beta chains form an alternating ring which encloses part of the gamma chain. CF(1) is attached to CF(0) by a central stalk formed by the gamma and epsilon chains, while a peripheral stalk is formed by the delta and b chains.

It is found in the cell inner membrane. In terms of biological role, key component of the proton channel; it plays a direct role in the translocation of protons across the membrane. The sequence is that of ATP synthase subunit a from Alcanivorax borkumensis (strain ATCC 700651 / DSM 11573 / NCIMB 13689 / SK2).